We begin with the raw amino-acid sequence, 265 residues long: Putative cysteine-rich receptor-like protein kinase 9 (265 aa).

The N-terminal stretch at 1–23 (MSSLISFIFLFLFSFLTSFKASA) is a signal peptide. 2 Gnk2-homologous domains span residues 27–131 (FYLN…DKNI) and 142–244 (FILS…LYSF). Residues N35, N60, N69, N153, N177, and N246 are each glycosylated (N-linked (GlcNAc...) asparagine).

The protein belongs to the protein kinase superfamily. Ser/Thr protein kinase family. CRK subfamily.

It is found in the secreted. This Arabidopsis thaliana (Mouse-ear cress) protein is Putative cysteine-rich receptor-like protein kinase 9 (CRK9).